The following is a 169-amino-acid chain: Sorting nexin-24 (169 aa).

An N-acetylmethionine modification is found at M1. The PX domain maps to 1-125 (MEVYIPSFRY…SFDETESEES (125 aa)). R38, S40, K61, and R74 together coordinate a 1,2-diacyl-sn-glycero-3-phospho-(1D-myo-inositol-3-phosphate). Residues S113 and S116 each carry the phosphoserine modification.

The protein belongs to the sorting nexin family.

The protein localises to the cytoplasmic vesicle membrane. Its function is as follows. May be involved in several stages of intracellular trafficking. The chain is Sorting nexin-24 (SNX24) from Bos taurus (Bovine).